Reading from the N-terminus, the 329-residue chain is Fructose-1,6-bisphosphatase class 1 (329 aa).

Positions 84, 103, 105, and 106 each coordinate Mg(2+). Substrate is bound by residues 106-109 (DGSS), asparagine 196, and lysine 262. Glutamate 268 serves as a coordination point for Mg(2+).

This sequence belongs to the FBPase class 1 family. As to quaternary structure, homotetramer. Requires Mg(2+) as cofactor.

It localises to the cytoplasm. It catalyses the reaction beta-D-fructose 1,6-bisphosphate + H2O = beta-D-fructose 6-phosphate + phosphate. It participates in carbohydrate biosynthesis; gluconeogenesis. This is Fructose-1,6-bisphosphatase class 1 from Shewanella loihica (strain ATCC BAA-1088 / PV-4).